The following is a 201-amino-acid chain: Glycerol-3-phosphate acyltransferase (201 aa).

Transmembrane regions (helical) follow at residues 5–25 (LLGA…FGVV), 55–75 (KMGV…ILLA), 88–108 (WSTA…WLGF), 118–138 (LGIF…GYAV), and 164–184 (TYGV…LIFL).

The protein belongs to the PlsY family. In terms of assembly, probably interacts with PlsX.

It localises to the cell inner membrane. It carries out the reaction an acyl phosphate + sn-glycerol 3-phosphate = a 1-acyl-sn-glycero-3-phosphate + phosphate. The protein operates within lipid metabolism; phospholipid metabolism. Catalyzes the transfer of an acyl group from acyl-phosphate (acyl-PO(4)) to glycerol-3-phosphate (G3P) to form lysophosphatidic acid (LPA). This enzyme utilizes acyl-phosphate as fatty acyl donor, but not acyl-CoA or acyl-ACP. The polypeptide is Glycerol-3-phosphate acyltransferase (Anaeromyxobacter dehalogenans (strain 2CP-C)).